Here is a 530-residue protein sequence, read N- to C-terminus: UDP-N-acetylmuramoyl-L-alanyl-D-glutamate--2,6-diaminopimelate ligase (530 aa).

Leucine 52 is a binding site for UDP-N-acetyl-alpha-D-muramoyl-L-alanyl-D-glutamate. ATP is bound at residue 139–145 (GTSGKTT). Residues 181–182 (TT), serine 208, and arginine 216 each bind UDP-N-acetyl-alpha-D-muramoyl-L-alanyl-D-glutamate. The residue at position 248 (lysine 248) is an N6-carboxylysine. Residues arginine 410, 434-437 (DNPR), glycine 488, and glutamate 492 contribute to the meso-2,6-diaminopimelate site. The Meso-diaminopimelate recognition motif signature appears at 434-437 (DNPR).

It belongs to the MurCDEF family. MurE subfamily. Mg(2+) is required as a cofactor. Post-translationally, carboxylation is probably crucial for Mg(2+) binding and, consequently, for the gamma-phosphate positioning of ATP.

The protein localises to the cytoplasm. The catalysed reaction is UDP-N-acetyl-alpha-D-muramoyl-L-alanyl-D-glutamate + meso-2,6-diaminopimelate + ATP = UDP-N-acetyl-alpha-D-muramoyl-L-alanyl-gamma-D-glutamyl-meso-2,6-diaminopimelate + ADP + phosphate + H(+). The protein operates within cell wall biogenesis; peptidoglycan biosynthesis. In terms of biological role, catalyzes the addition of meso-diaminopimelic acid to the nucleotide precursor UDP-N-acetylmuramoyl-L-alanyl-D-glutamate (UMAG) in the biosynthesis of bacterial cell-wall peptidoglycan. This chain is UDP-N-acetylmuramoyl-L-alanyl-D-glutamate--2,6-diaminopimelate ligase, found in Mycobacterium leprae (strain TN).